Consider the following 603-residue polypeptide: UvrABC system protein C (603 aa).

The region spanning 17 to 94 is the GIY-YIG domain; the sequence is TTSGCYKMLN…IKTHKPDYNV (78 aa).

The protein belongs to the UvrC family. As to quaternary structure, interacts with UvrB in an incision complex.

It localises to the cytoplasm. In terms of biological role, the UvrABC repair system catalyzes the recognition and processing of DNA lesions. UvrC both incises the 5' and 3' sides of the lesion. The N-terminal half is responsible for the 3' incision and the C-terminal half is responsible for the 5' incision. This is UvrABC system protein C from Borreliella burgdorferi (strain ATCC 35210 / DSM 4680 / CIP 102532 / B31) (Borrelia burgdorferi).